We begin with the raw amino-acid sequence, 589 residues long: Oligo-1,6-glucosidase IMA2 (589 aa).

Residue Asp-215 is the Nucleophile of the active site. The active-site Proton donor is Glu-277.

It belongs to the glycosyl hydrolase 13 family.

The catalysed reaction is Hydrolysis of (1-&gt;6)-alpha-D-glucosidic linkages in some oligosaccharides produced from starch and glycogen by alpha-amylase, and in isomaltose.. Functionally, alpha-glucosidase with specificity for isomaltase, methyl-alpha-glucoside, and palatinose. In Saccharomyces cerevisiae (strain ATCC 204508 / S288c) (Baker's yeast), this protein is Oligo-1,6-glucosidase IMA2 (IMA2).